The chain runs to 130 residues: Small ribosomal subunit protein uS9 (130 aa).

This sequence belongs to the universal ribosomal protein uS9 family.

This Aromatoleum aromaticum (strain DSM 19018 / LMG 30748 / EbN1) (Azoarcus sp. (strain EbN1)) protein is Small ribosomal subunit protein uS9.